The primary structure comprises 346 residues: Annexin A1 (346 aa).

Ala-2 is subject to N-acetylalanine. Ser-5 bears the Phosphoserine; by TRPM7 mark. Residue Gln-19 forms an Isoglutamyl lysine isopeptide (Gln-Lys) (interchain with K-?) linkage. Phosphotyrosine is present on Tyr-21. Ser-27 is subject to Phosphoserine; by PKC. Phosphoserine is present on residues Ser-34 and Ser-37. 4 Annexin repeats span residues 42–113, 114–185, 197–269, and 273–344; these read FNVS…AMLK, TPAQ…ALAK, DLAD…TIVK, and STPA…ALCG. Lys-58 is modified (N6-acetyllysine). Ca(2+)-binding residues include Gly-59, Val-60, Glu-62, Arg-97, Leu-100, Glu-105, Met-127, Gly-129, Gly-131, Thr-132, and Glu-134. The residue at position 136 (Thr-136) is a Phosphothreonine. Residues Asp-171, Gly-210, and Arg-213 each contribute to the Ca(2+) site. Lys-214 participates in a covalent cross-link: Glycyl lysine isopeptide (Lys-Gly) (interchain with G-Cter in SUMO1); alternate. A Glycyl lysine isopeptide (Lys-Gly) (interchain with G-Cter in SUMO2); alternate cross-link involves residue Lys-214. Ca(2+)-binding residues include Gly-215, Asp-253, Glu-255, and Leu-256. Residue Lys-257 forms a Glycyl lysine isopeptide (Lys-Gly) (interchain with G-Cter in SUMO1) linkage. Positions 261, 286, 288, and 290 each coordinate Ca(2+). Lys-312 carries the N6-acetyllysine modification. Cys-324 and Cys-343 form a disulfide bridge. Leu-328, Glu-330, and Thr-331 together coordinate Ca(2+). Residue Lys-332 forms a Glycyl lysine isopeptide (Lys-Gly) (interchain with G-Cter in SUMO1) linkage. Ca(2+) is bound at residue Glu-336.

This sequence belongs to the annexin family. In terms of assembly, homodimer; non-covalently linked. Homodimer; linked by transglutamylation. Homodimers linked by transglutamylation are observed in placenta, but not in other tissues. Interacts with S100A11. Heterotetramer, formed by two molecules each of S100A11 and ANXA1. Interacts with DYSF. Interacts with EGFR. Post-translationally, phosphorylated by protein kinase C, EGFR and TRPM7. Phosphorylated in response to EGF treatment. Sumoylated. In terms of processing, proteolytically cleaved by cathepsin CTSG to release the active N-terminal peptide Ac2-26. In terms of tissue distribution, detected in lung. Detected at the apical membrane of airway epithelial cells. Detected in intestinal epithelial cells. Detected in skeletal muscle. Detected in prostate. Detected in thymus (at protein level). Detected in stomach, lung, spleen, ovary and uterus, and at lower levels in kidney, thymus and heart.

The protein localises to the nucleus. Its subcellular location is the cytoplasm. It localises to the cell projection. The protein resides in the cilium. It is found in the basolateral cell membrane. The protein localises to the lateral cell membrane. Its subcellular location is the cell membrane. It localises to the apical cell membrane. The protein resides in the membrane. It is found in the early endosome. The protein localises to the cytoplasmic vesicle membrane. Its subcellular location is the endosome membrane. It localises to the secreted. The protein resides in the extracellular space. It is found in the extracellular exosome. The protein localises to the cytoplasmic vesicle. Its subcellular location is the secretory vesicle lumen. It localises to the phagocytic cup. Plays important roles in the innate immune response as effector of glucocorticoid-mediated responses and regulator of the inflammatory process. Has anti-inflammatory activity. Plays a role in glucocorticoid-mediated down-regulation of the early phase of the inflammatory response. Contributes to the adaptive immune response by enhancing signaling cascades that are triggered by T-cell activation, regulates differentiation and proliferation of activated T-cells. Promotes the differentiation of T-cells into Th1 cells and negatively regulates differentiation into Th2 cells. Has no effect on unstimulated T-cells. Negatively regulates hormone exocytosis via activation of the formyl peptide receptors and reorganization of the actin cytoskeleton. Has high affinity for Ca(2+) and can bind up to eight Ca(2+) ions. Displays Ca(2+)-dependent binding to phospholipid membranes. Plays a role in the formation of phagocytic cups and phagosomes. Plays a role in phagocytosis by mediating the Ca(2+)-dependent interaction between phagosomes and the actin cytoskeleton. Functionally, functions at least in part by activating the formyl peptide receptors and downstream signaling cascades. Promotes chemotaxis of granulocytes and monocytes via activation of the formyl peptide receptors. Promotes rearrangement of the actin cytoskeleton, cell polarization and cell migration. Promotes resolution of inflammation and wound healing. Acts via neutrophil N-formyl peptide receptors to enhance the release of CXCL2. The polypeptide is Annexin A1 (Anxa1) (Mus musculus (Mouse)).